Consider the following 272-residue polypeptide: Phosphatidylglycerol--prolipoprotein diacylglyceryl transferase (272 aa).

A run of 7 helical transmembrane segments spans residues 17–37 (LQVH…WGLA), 55–75 (LVFY…VLFY), 90–110 (VWTG…AMLF), 125–145 (FVAP…FIGG), 174–194 (PSQI…LWWF), 202–222 (MAVS…MEFF), and 230–250 (GFIL…MLLI). Residue arginine 138 coordinates a 1,2-diacyl-sn-glycero-3-phospho-(1'-sn-glycerol).

This sequence belongs to the Lgt family.

The protein resides in the cell inner membrane. It carries out the reaction L-cysteinyl-[prolipoprotein] + a 1,2-diacyl-sn-glycero-3-phospho-(1'-sn-glycerol) = an S-1,2-diacyl-sn-glyceryl-L-cysteinyl-[prolipoprotein] + sn-glycerol 1-phosphate + H(+). It functions in the pathway protein modification; lipoprotein biosynthesis (diacylglyceryl transfer). Functionally, catalyzes the transfer of the diacylglyceryl group from phosphatidylglycerol to the sulfhydryl group of the N-terminal cysteine of a prolipoprotein, the first step in the formation of mature lipoproteins. The chain is Phosphatidylglycerol--prolipoprotein diacylglyceryl transferase from Acinetobacter baumannii (strain AB307-0294).